The sequence spans 424 residues: Trigger factor (424 aa).

The PPIase FKBP-type domain occupies glycine 163–proline 248.

The protein belongs to the FKBP-type PPIase family. Tig subfamily.

The protein localises to the cytoplasm. The catalysed reaction is [protein]-peptidylproline (omega=180) = [protein]-peptidylproline (omega=0). Involved in protein export. Acts as a chaperone by maintaining the newly synthesized protein in an open conformation. Functions as a peptidyl-prolyl cis-trans isomerase. This chain is Trigger factor, found in Bacillus pumilus (strain SAFR-032).